Here is a 100-residue protein sequence, read N- to C-terminus: Sec-independent protein translocase protein TatA (100 aa).

The chain crosses the membrane as a helical span at residues 1 to 21; the sequence is MGALRPWHIAVLVVVLILLFG. The span at 46 to 58 shows a compositional bias: basic and acidic residues; it reads LHDDDRDLAEKAD. The segment at 46–100 is disordered; that stretch reads LHDDDRDLAEKADAQAGYQPMPPQVQQGQHPQQSPYPAPPQQQPVVDPVQRTRDS. Residues 69–78 are compositionally biased toward low complexity; sequence QVQQGQHPQQ.

Belongs to the TatA/E family. In terms of assembly, the Tat system comprises two distinct complexes: a TatABC complex, containing multiple copies of TatA, TatB and TatC subunits, and a separate TatA complex, containing only TatA subunits. Substrates initially bind to the TatABC complex, which probably triggers association of the separate TatA complex to form the active translocon.

Its subcellular location is the cell membrane. Its function is as follows. Part of the twin-arginine translocation (Tat) system that transports large folded proteins containing a characteristic twin-arginine motif in their signal peptide across membranes. TatA could form the protein-conducting channel of the Tat system. The polypeptide is Sec-independent protein translocase protein TatA (Salinispora tropica (strain ATCC BAA-916 / DSM 44818 / JCM 13857 / NBRC 105044 / CNB-440)).